Reading from the N-terminus, the 598-residue chain is Elongation factor 4 2 (598 aa).

Residues 2 to 184 form the tr-type G domain; that stretch reads KHIRNFCIIA…GIVKNLPAPK (183 aa). GTP contacts are provided by residues 14–19 and 131–134; these read DHGKST and NKID.

The protein belongs to the TRAFAC class translation factor GTPase superfamily. Classic translation factor GTPase family. LepA subfamily.

The protein resides in the cell inner membrane. It catalyses the reaction GTP + H2O = GDP + phosphate + H(+). In terms of biological role, required for accurate and efficient protein synthesis under certain stress conditions. May act as a fidelity factor of the translation reaction, by catalyzing a one-codon backward translocation of tRNAs on improperly translocated ribosomes. Back-translocation proceeds from a post-translocation (POST) complex to a pre-translocation (PRE) complex, thus giving elongation factor G a second chance to translocate the tRNAs correctly. Binds to ribosomes in a GTP-dependent manner. The sequence is that of Elongation factor 4 2 from Rhodopirellula baltica (strain DSM 10527 / NCIMB 13988 / SH1).